A 1005-amino-acid polypeptide reads, in one-letter code: DNA polymerase (1005 aa).

It belongs to the DNA polymerase type-B family. As to quaternary structure, interacts with OPG148. Component of the Uracil-DNA glycosylase(UDG)-OPG148-polymerase complex; OPG148 and OPG116/UDG form a heterodimeric processivity factor that associates with OPG071 to form the processive polymerase holoenzyme.

The catalysed reaction is DNA(n) + a 2'-deoxyribonucleoside 5'-triphosphate = DNA(n+1) + diphosphate. Its function is as follows. Catalyzes DNA synthesis. Acquires processivity by associating with a heterodimeric processivity factor comprised of the viral OPG148 and OPG116 proteins, thereby forming the DNA polymerase holoenzyme. Displays 3'- to 5' exonuclease activity. Might participate in viral DNA recombination. Does not perform OPG116/D4synthesis across an abasic site. The protein is DNA polymerase (OPG071) of Variola virus.